Here is a 123-residue protein sequence, read N- to C-terminus: Large ribosomal subunit protein uL22c (123 aa).

The protein belongs to the universal ribosomal protein uL22 family. As to quaternary structure, part of the 50S ribosomal subunit.

Its subcellular location is the plastid. It is found in the chloroplast. This protein binds specifically to 23S rRNA. In terms of biological role, the globular domain of the protein is located near the polypeptide exit tunnel on the outside of the subunit, while an extended beta-hairpin is found that lines the wall of the exit tunnel in the center of the 70S ribosome. The sequence is that of Large ribosomal subunit protein uL22c (rpl22) from Illicium oligandrum (Star anise).